The chain runs to 564 residues: Dihydroxy-acid dehydratase (564 aa).

Cys-53 contributes to the [2Fe-2S] cluster binding site. Asp-85 is a Mg(2+) binding site. Position 126 (Cys-126) interacts with [2Fe-2S] cluster. Mg(2+) contacts are provided by Asp-127 and Lys-128. Lys-128 carries the post-translational modification N6-carboxylysine. Cys-203 is a [2Fe-2S] cluster binding site. Glu-454 contacts Mg(2+). Catalysis depends on Ser-480, which acts as the Proton acceptor.

The protein belongs to the IlvD/Edd family. Homodimer. The cofactor is [2Fe-2S] cluster. Mg(2+) serves as cofactor.

The enzyme catalyses (2R)-2,3-dihydroxy-3-methylbutanoate = 3-methyl-2-oxobutanoate + H2O. The catalysed reaction is (2R,3R)-2,3-dihydroxy-3-methylpentanoate = (S)-3-methyl-2-oxopentanoate + H2O. The protein operates within amino-acid biosynthesis; L-isoleucine biosynthesis; L-isoleucine from 2-oxobutanoate: step 3/4. Its pathway is amino-acid biosynthesis; L-valine biosynthesis; L-valine from pyruvate: step 3/4. Functions in the biosynthesis of branched-chain amino acids. Catalyzes the dehydration of (2R,3R)-2,3-dihydroxy-3-methylpentanoate (2,3-dihydroxy-3-methylvalerate) into 2-oxo-3-methylpentanoate (2-oxo-3-methylvalerate) and of (2R)-2,3-dihydroxy-3-methylbutanoate (2,3-dihydroxyisovalerate) into 2-oxo-3-methylbutanoate (2-oxoisovalerate), the penultimate precursor to L-isoleucine and L-valine, respectively. In Leifsonia xyli subsp. xyli (strain CTCB07), this protein is Dihydroxy-acid dehydratase.